We begin with the raw amino-acid sequence, 363 residues long: Histidinol-phosphate aminotransferase (363 aa).

K220 bears the N6-(pyridoxal phosphate)lysine mark.

It belongs to the class-II pyridoxal-phosphate-dependent aminotransferase family. Histidinol-phosphate aminotransferase subfamily. As to quaternary structure, homodimer. Pyridoxal 5'-phosphate is required as a cofactor.

It carries out the reaction L-histidinol phosphate + 2-oxoglutarate = 3-(imidazol-4-yl)-2-oxopropyl phosphate + L-glutamate. It functions in the pathway amino-acid biosynthesis; L-histidine biosynthesis; L-histidine from 5-phospho-alpha-D-ribose 1-diphosphate: step 7/9. This chain is Histidinol-phosphate aminotransferase, found in Paramagnetospirillum magneticum (strain ATCC 700264 / AMB-1) (Magnetospirillum magneticum).